The chain runs to 1025 residues: Leucyl-cystinyl aminopeptidase (1025 aa).

N-acetylmethionine is present on M1. The Cytoplasmic segment spans residues 1-109 (MESFTNDRLQ…DGTCSLPSAR (109 aa)). Positions 53-54 (LL) match the Dileucine internalization motif motif. Y70 bears the Phosphotyrosine mark. The Dileucine internalization motif motif lies at 76–77 (LL). 2 positions are modified to phosphoserine: S80 and S91. Residues 96–101 (RQSPDG) form a tankyrase binding region. A helical; Signal-anchor for type II membrane protein membrane pass occupies residues 110–131 (TLVICVFVIVVAVSVIMVIYLL). Residues 132–1025 (PRCTFTKEGC…RNLKTLSQWL (894 aa)) are Extracellular-facing. N-linked (GlcNAc...) asparagine glycans are attached at residues N145, N184, N215, N256, and N266. E295 is a substrate binding site. N-linked (GlcNAc...) asparagine glycosylation is found at N368 and N374. Residue 428–432 (GAMEN) participates in substrate binding. A glycan (N-linked (GlcNAc...) asparagine) is linked at N447. H464 is a binding site for Zn(2+). Catalysis depends on E465, which acts as the Proton acceptor. Zn(2+) contacts are provided by H468 and E487. Residues N525, N578, N664, N682, N695, N758, N834, N850, and N989 are each glycosylated (N-linked (GlcNAc...) asparagine).

This sequence belongs to the peptidase M1 family. Homodimer. Binds tankyrases 1 and 2. It depends on Zn(2+) as a cofactor.

It is found in the cell membrane. Its subcellular location is the endomembrane system. It carries out the reaction Release of an N-terminal amino acid, Cys-|-Xaa-, in which the half-cystine residue is involved in a disulfide loop, notably in oxytocin or vasopressin. Hydrolysis rates on a range of aminoacyl arylamides exceed that for the cystinyl derivative, however.. Functionally, release of an N-terminal amino acid, cleave before cysteine, leucine as well as other amino acids. Degrades peptide hormones such as oxytocin, vasopressin and angiotensin III, and plays a role in maintaining homeostasis during pregnancy. May be involved in the inactivation of neuronal peptides in the brain. Cleaves Met-enkephalin and dynorphin. Binds angiotensin IV and may be the angiotensin IV receptor in the brain. This Mus musculus (Mouse) protein is Leucyl-cystinyl aminopeptidase (Lnpep).